A 152-amino-acid chain; its full sequence is UPF0735 ACT domain-containing protein CTC_00116 (152 aa).

The region spanning 76–151 (IISVTLNHRP…NVIKLDLIAM (76 aa)) is the ACT domain.

It belongs to the UPF0735 family.

The protein is UPF0735 ACT domain-containing protein CTC_00116 of Clostridium tetani (strain Massachusetts / E88).